Reading from the N-terminus, the 402-residue chain is Arginine biosynthesis bifunctional protein ArgJ (402 aa).

Substrate contacts are provided by Thr152, Lys178, Thr189, Glu275, Asn397, and Thr402. Thr189 acts as the Nucleophile in catalysis.

This sequence belongs to the ArgJ family. In terms of assembly, heterotetramer of two alpha and two beta chains.

Its subcellular location is the cytoplasm. It carries out the reaction N(2)-acetyl-L-ornithine + L-glutamate = N-acetyl-L-glutamate + L-ornithine. The catalysed reaction is L-glutamate + acetyl-CoA = N-acetyl-L-glutamate + CoA + H(+). It participates in amino-acid biosynthesis; L-arginine biosynthesis; L-ornithine and N-acetyl-L-glutamate from L-glutamate and N(2)-acetyl-L-ornithine (cyclic): step 1/1. Its pathway is amino-acid biosynthesis; L-arginine biosynthesis; N(2)-acetyl-L-ornithine from L-glutamate: step 1/4. Its function is as follows. Catalyzes two activities which are involved in the cyclic version of arginine biosynthesis: the synthesis of N-acetylglutamate from glutamate and acetyl-CoA as the acetyl donor, and of ornithine by transacetylation between N(2)-acetylornithine and glutamate. The polypeptide is Arginine biosynthesis bifunctional protein ArgJ (Symbiobacterium thermophilum (strain DSM 24528 / JCM 14929 / IAM 14863 / T)).